Reading from the N-terminus, the 597-residue chain is Probable tyrosine-protein phosphatase (597 aa).

Residues 55–81 (VSSSSDAAPTSISTTTTSTTSMTDASA) show a composition bias toward low complexity. 3 disordered regions span residues 55 to 89 (VSSSSDAAPTSISTTTTSTTSMTDASANADNQQVY), 107 to 172 (SFSI…PNSL), and 188 to 228 (STNG…GNNN). Polar residues predominate over residues 107-126 (SFSIQPNQTPTMLPTSSYTL). Positions 136–151 (TSSISSISSTSSNSTS) are enriched in low complexity. Composition is skewed to polar residues over residues 188-206 (STNGYTSPLPKSTNSNQPR) and 216-228 (KKSTPVNRIGNNN). Positions 428–579 (GPKNVLNNLI…LMEFGDKLNN (152 aa)) constitute a Tyrosine-protein phosphatase domain. Cys-516 acts as the Phosphocysteine intermediate in catalysis.

It belongs to the protein-tyrosine phosphatase family. Non-receptor class dual specificity subfamily.

The catalysed reaction is O-phospho-L-tyrosyl-[protein] + H2O = L-tyrosyl-[protein] + phosphate. This is Probable tyrosine-protein phosphatase (CPP1) from Candida albicans (strain WO-1) (Yeast).